A 528-amino-acid polypeptide reads, in one-letter code: Probable feruloyl esterase B-1 (528 aa).

The first 19 residues, 1–19, serve as a signal peptide directing secretion; it reads MMWWFLLIGLASAAATASS. 6 disulfide bridges follow: Cys29/Cys78, Cys64/Cys117, Cys190/Cys445, Cys259/Cys276, Cys285/Cys295, and Cys505/Cys527. N-linked (GlcNAc...) asparagine glycans are attached at residues Asn83 and Asn101. The Acyl-ester intermediate role is filled by Ser191. Residues Asp260, Asp263, Ala265, Asp267, and Ile269 each coordinate Ca(2+). Residues Asn286, Asn354, and Asn385 are each glycosylated (N-linked (GlcNAc...) asparagine). Residues Asp404 and His444 each act as charge relay system in the active site.

This sequence belongs to the tannase family.

The protein resides in the secreted. It catalyses the reaction feruloyl-polysaccharide + H2O = ferulate + polysaccharide.. Its function is as follows. Involved in degradation of plant cell walls. Hydrolyzes the feruloyl-arabinose ester bond in arabinoxylans as well as the feruloyl-galactose and feruloyl-arabinose ester bonds in pectin. The sequence is that of Probable feruloyl esterase B-1 (faeB-1) from Aspergillus fumigatus (strain CBS 144.89 / FGSC A1163 / CEA10) (Neosartorya fumigata).